The chain runs to 339 residues: 1-aminocyclopropane-1-carboxylate deaminase (339 aa).

K52 bears the N6-(pyridoxal phosphate)lysine mark. S79 serves as the catalytic Nucleophile.

This sequence belongs to the ACC deaminase/D-cysteine desulfhydrase family. In terms of assembly, homotrimer. Requires pyridoxal 5'-phosphate as cofactor.

The enzyme catalyses 1-aminocyclopropane-1-carboxylate + H2O = 2-oxobutanoate + NH4(+). Catalyzes a cyclopropane ring-opening reaction, the irreversible conversion of 1-aminocyclopropane-1-carboxylate (ACC) to ammonia and alpha-ketobutyrate. Allows growth on ACC as a nitrogen source. The protein is 1-aminocyclopropane-1-carboxylate deaminase of Bradyrhizobium sp. (strain BTAi1 / ATCC BAA-1182).